A 678-amino-acid chain; its full sequence is MPNDPLLQPYQLKHLTLRNRIIVTAHEPAYPEDGMPKERYRAYTVERARGGVAMTMTAGSAAVSKDSPPVFNNLLAYRDEIVPWIREMTDAVHEEGAVIMIQLTHLGRRTRWDKGDWLPVVAPSHHREAAHRAFPKKIEDWDIDRIIKDFADAAERMKAGGMDGVELEAYGHLIDQFASPLTNELDGPYGGSLDNRMRFCFDVLKAIRARVGDEFILGVRYTADECLPGGTDKAEGLEISKRLKESGLIDYLNIIRGHIDTDPGLTDVIPIQGMANSPHLDFAGEIRAATNFPTFHAAKIPDVATARHAIASGKVDMVGMTRAHMTDPHIVRKIIEKREEDIRPCVGANYCLDRIYQGGAAYCIHNAATGRELTMPHSIAKAHCRRKVVVVGTGPAGLEAARVAGERGHEVIVFEAASDPGGQVRLTAQSPRRREMISIIDWRMSQCEKLGVTFHFNTWAEAEAIQAESPDVVIIATGGLPHTEVLSRGNELVVSAWDIISGDAKPGTNVLIFDDAGDHAALQAAEFLATAGARVEIMTPDRSFAPEVMAMNLVPYMRCLQKLDVTFTVTYRLEAVEKSGNELVAHVGSDYGGISKQRTFDQVVVNHGTIPLDELYFELKPFSSNLGEIAHDQMIAGEPQSVVRNAEGKFQLFRIGDAVAARNTHAAIYDALRLLKDI.

Residues glycine 59, glutamine 102, arginine 220, lysine 299, and 321–322 (TR) each bind FMN. Residues cysteine 345, cysteine 351, and cysteine 363 each coordinate [4Fe-4S] cluster. Alanine 396, glutamate 415, glutamine 423, arginine 433, and alanine 460 together coordinate FAD.

The protein in the N-terminal section; belongs to the NADH:flavin oxidoreductase/NADH oxidase family. FMN is required as a cofactor. The cofactor is FAD. [4Fe-4S] cluster serves as cofactor.

The enzyme catalyses N-methyl-L-proline + NAD(+) + H2O = L-proline + formaldehyde + NADH + H(+). It participates in amine and polyamine degradation; stachydrine degradation. Its function is as follows. Possible NADH-dependent oxidase, may function as a demethylase that converts N-methylproline to proline. This Rhizobium meliloti (strain 1021) (Ensifer meliloti) protein is Probable N-methylproline demethylase.